Consider the following 237-residue polypeptide: 2,3-bisphosphoglycerate-dependent phosphoglycerate mutase (237 aa).

Residues 8 to 15, 21 to 22, Arg-60, 87 to 90, Lys-98, 114 to 115, and 180 to 181 contribute to the substrate site; these read RHGQSQWN, TG, ERHY, RR, and GN. The active-site Tele-phosphohistidine intermediate is His-9. The active-site Proton donor/acceptor is the Glu-87.

The protein belongs to the phosphoglycerate mutase family. BPG-dependent PGAM subfamily. In terms of assembly, homodimer.

The enzyme catalyses (2R)-2-phosphoglycerate = (2R)-3-phosphoglycerate. Its pathway is carbohydrate degradation; glycolysis; pyruvate from D-glyceraldehyde 3-phosphate: step 3/5. Functionally, catalyzes the interconversion of 2-phosphoglycerate and 3-phosphoglycerate. The protein is 2,3-bisphosphoglycerate-dependent phosphoglycerate mutase of Caulobacter sp. (strain K31).